The primary structure comprises 101 residues: MAKQSMIEREKKRAKMVAKYSAKRAELKKASVDMSLSFEERMEAMDKLAKLPRNASPVRQQNRCRLTGRPHGVYRKFGLSRNMLRQLAMQGDVPGLRKASW.

This sequence belongs to the universal ribosomal protein uS14 family. As to quaternary structure, part of the 30S ribosomal subunit. Contacts proteins S3 and S10.

Its function is as follows. Binds 16S rRNA, required for the assembly of 30S particles and may also be responsible for determining the conformation of the 16S rRNA at the A site. This is Small ribosomal subunit protein uS14 from Hydrogenovibrio crunogenus (strain DSM 25203 / XCL-2) (Thiomicrospira crunogena).